The following is a 340-amino-acid chain: Beta-hexosaminidase (340 aa).

Substrate-binding positions include Asp-60, Arg-68, Arg-127, and 157 to 158; that span reads KH. Residue His-170 is the Proton donor/acceptor of the active site. Catalysis depends on Asp-242, which acts as the Nucleophile.

Belongs to the glycosyl hydrolase 3 family. NagZ subfamily.

It localises to the cytoplasm. It catalyses the reaction Hydrolysis of terminal non-reducing N-acetyl-D-hexosamine residues in N-acetyl-beta-D-hexosaminides.. It participates in cell wall biogenesis; peptidoglycan recycling. Functionally, plays a role in peptidoglycan recycling by cleaving the terminal beta-1,4-linked N-acetylglucosamine (GlcNAc) from peptide-linked peptidoglycan fragments, giving rise to free GlcNAc, anhydro-N-acetylmuramic acid and anhydro-N-acetylmuramic acid-linked peptides. The polypeptide is Beta-hexosaminidase (Glaesserella parasuis serovar 5 (strain SH0165) (Haemophilus parasuis)).